A 577-amino-acid polypeptide reads, in one-letter code: Moesin (577 aa).

Positions 2–295 (PKTISVRVTT…GNHELYMRRR (294 aa)) constitute an FERM domain. S74 bears the Phosphoserine mark. Position 79 is an N6-acetyllysine (K79). At K83 the chain carries N6-succinyllysine. The [IL]-x-C-x-x-[DE] motif motif lies at 115–120 (IYCPPE). A Phosphotyrosine modification is found at Y116. C117 carries the S-nitrosocysteine modification. 2 positions are modified to N6-acetyllysine: K139 and K165. Disordered stretches follow at residues 323 to 342 (LENE…KIER), 375 to 409 (LEQE…ASRD), and 466 to 518 (AMST…NERV). Residues 375–401 (LEQERKRAQSEAEKLAKERQEAEEAKE) are compositionally biased toward basic and acidic residues. Phosphoserine is present on S407. Positions 476 to 487 (AENEQDEQDENG) are enriched in acidic residues. The segment covering 492-518 (ADLRADAMAKDRSEEERTTEAEKNERV) has biased composition (basic and acidic residues). Phosphoserine is present on S527. At T558 the chain carries Phosphothreonine; by ROCK2 and STK10.

In resting T-cells, part of a PAG1-NHERF1-MSN complex which is disrupted upon TCR activation. Interacts with NHERF1. Interacts with PPP1R16B. Interacts with SELPLG and SYK; these interactions mediate the activation of SYK by SELPLG. Interacts with PDPN (via cytoplasmic domain); this interaction activates RHOA and promotes epithelial-mesenchymal transition. Interacts with SPN/CD43 cytoplasmic tail. Interacts with CD44. Interacts with ICAM2. Interacts with ICAM3 (via C-terminus). Interacts with PDZD8. Interacts with F-actin. Interacts with CD46. Interacts with PTPN6. As to quaternary structure, (Microbial infection) Interacts with HIV-1 envelope protein gp120. Post-translationally, phosphorylation on Thr-558 is crucial for the formation of microvilli-like structures. Phosphorylation by ROCK2 suppresses the head-to-tail association of the N-terminal and C-terminal halves resulting in an opened conformation which is capable of actin and membrane-binding. Phosphorylation on Thr-558 by STK10 negatively regulates lymphocyte migration and polarization. S-nitrosylation of Cys-117 is induced by interferon-gamma and oxidatively-modified low-densitity lipoprotein (LDL(ox)) implicating the iNOS-S100A8/9 transnitrosylase complex. As to expression, in all tissues and cultured cells studied.

The protein localises to the cell membrane. The protein resides in the cytoplasm. It localises to the cytoskeleton. It is found in the apical cell membrane. Its subcellular location is the cell projection. The protein localises to the microvillus membrane. The protein resides in the microvillus. With respect to regulation, a head-to-tail association, of the N-terminal and C-terminal halves results in a closed conformation (inactive form) which is incapable of actin or membrane-binding. Its function is as follows. Ezrin-radixin-moesin (ERM) family protein that connects the actin cytoskeleton to the plasma membrane and thereby regulates the structure and function of specific domains of the cell cortex. Tethers actin filaments by oscillating between a resting and an activated state providing transient interactions between moesin and the actin cytoskeleton. Once phosphorylated on its C-terminal threonine, moesin is activated leading to interaction with F-actin and cytoskeletal rearrangement. These rearrangements regulate many cellular processes, including cell shape determination, membrane transport, and signal transduction. The role of moesin is particularly important in immunity acting on both T and B-cells homeostasis and self-tolerance, regulating lymphocyte egress from lymphoid organs. Modulates phagolysosomal biogenesis in macrophages. Also participates in immunologic synapse formation. This is Moesin from Homo sapiens (Human).